Here is a 250-residue protein sequence, read N- to C-terminus: Ubiquinone/menaquinone biosynthesis C-methyltransferase UbiE (250 aa).

Residues Thr-73, Asp-94, 122–123, and Ser-139 contribute to the S-adenosyl-L-methionine site; that span reads NA.

This sequence belongs to the class I-like SAM-binding methyltransferase superfamily. MenG/UbiE family.

The enzyme catalyses a 2-demethylmenaquinol + S-adenosyl-L-methionine = a menaquinol + S-adenosyl-L-homocysteine + H(+). It carries out the reaction a 2-methoxy-6-(all-trans-polyprenyl)benzene-1,4-diol + S-adenosyl-L-methionine = a 5-methoxy-2-methyl-3-(all-trans-polyprenyl)benzene-1,4-diol + S-adenosyl-L-homocysteine + H(+). It functions in the pathway quinol/quinone metabolism; menaquinone biosynthesis; menaquinol from 1,4-dihydroxy-2-naphthoate: step 2/2. The protein operates within cofactor biosynthesis; ubiquinone biosynthesis. In terms of biological role, methyltransferase required for the conversion of demethylmenaquinol (DMKH2) to menaquinol (MKH2) and the conversion of 2-polyprenyl-6-methoxy-1,4-benzoquinol (DDMQH2) to 2-polyprenyl-3-methyl-6-methoxy-1,4-benzoquinol (DMQH2). The sequence is that of Ubiquinone/menaquinone biosynthesis C-methyltransferase UbiE from Francisella tularensis subsp. holarctica (strain FTNF002-00 / FTA).